The following is a 127-amino-acid chain: MSTPKDMRYSKEHEWVKVEDGKARIGITHFAQAELGDIVFVELPEVGAEIKADEPFGSVESVKTVSELYAPINGTVTEVNEDLDDSPEFVNESPYEKAWMIVVEPADAEEIENLMTSEQYDEMTQED.

Positions 22–104 constitute a Lipoyl-binding domain; sequence KARIGITHFA…YEKAWMIVVE (83 aa). The residue at position 63 (K63) is an N6-lipoyllysine.

The protein belongs to the GcvH family. The glycine cleavage system is composed of four proteins: P, T, L and H. It depends on (R)-lipoate as a cofactor.

Its function is as follows. The glycine cleavage system catalyzes the degradation of glycine. The H protein shuttles the methylamine group of glycine from the P protein to the T protein. Is also involved in protein lipoylation via its role as an octanoyl/lipoyl carrier protein intermediate. The sequence is that of Glycine cleavage system H protein from Bacillus velezensis (strain DSM 23117 / BGSC 10A6 / LMG 26770 / FZB42) (Bacillus amyloliquefaciens subsp. plantarum).